A 123-amino-acid polypeptide reads, in one-letter code: Large ribosomal subunit protein eL8 (123 aa).

Belongs to the eukaryotic ribosomal protein eL8 family. As to quaternary structure, may be present in up to 3 copies per 70S ribosome. Part of the 50S ribosomal subunit, where it binds 23S rRNA at its canonical site near the L1 stalk, as well as a possible second 50S binding site near helix 25 and a possible third site on the beak of the 30S subunit. Component of box C/D small ribonucleoprotein (sRNP) particles that contain rpl7ae, FlpA and nop5, plus a guide RNA. These sRNP particles form homodimers, giving rise to an asymmetric holoenzyme. Probably part of the RNase P complex.

The protein resides in the cytoplasm. Functionally, multifunctional RNA-binding protein that recognizes the K-turn motif in ribosomal RNA, the RNA component of RNase P, box H/ACA, box C/D and box C'/D' sRNAs. Component of the 70S ribosome. Component of a box C/D small ribonucleoprotein (sRNP) particle that is involved in pre-rRNA and tRNA processing. Utilizes the methyl donor S-adenosyl-L-methionine to catalyze the site-specific 2'-hydroxyl methylation of ribose moieties in rRNA and tRNA. Site specificity is provided by a guide RNA that base pairs with the substrate. Methylation occurs at a characteristic distance from the sequence involved in base pairing with the guide RNA. The sequence is that of Large ribosomal subunit protein eL8 from Pyrococcus furiosus (strain ATCC 43587 / DSM 3638 / JCM 8422 / Vc1).